The chain runs to 1166 residues: DNA-directed RNA polymerase subunit beta (1166 aa).

This sequence belongs to the RNA polymerase beta chain family. The RNAP catalytic core consists of 2 alpha, 1 beta, 1 beta' and 1 omega subunit. When a sigma factor is associated with the core the holoenzyme is formed, which can initiate transcription.

The enzyme catalyses RNA(n) + a ribonucleoside 5'-triphosphate = RNA(n+1) + diphosphate. Its function is as follows. DNA-dependent RNA polymerase catalyzes the transcription of DNA into RNA using the four ribonucleoside triphosphates as substrates. The protein is DNA-directed RNA polymerase subunit beta of Nocardioides sp. (strain ATCC BAA-499 / JS614).